We begin with the raw amino-acid sequence, 195 residues long: Protease (195 aa).

One can recognise a Peptidase A2 domain in the interval 71–149; sequence ALMLVDTGAE…DKWQILGRDV (79 aa). Asp76 is an active-site residue.

This Bos taurus (Bovine) protein is Protease.